The sequence spans 321 residues: Transaldolase (321 aa).

The active-site Schiff-base intermediate with substrate is Lys132.

The protein belongs to the transaldolase family. Type 1 subfamily. As to quaternary structure, homodimer.

Its subcellular location is the cytoplasm. The catalysed reaction is D-sedoheptulose 7-phosphate + D-glyceraldehyde 3-phosphate = D-erythrose 4-phosphate + beta-D-fructose 6-phosphate. Its pathway is carbohydrate degradation; pentose phosphate pathway; D-glyceraldehyde 3-phosphate and beta-D-fructose 6-phosphate from D-ribose 5-phosphate and D-xylulose 5-phosphate (non-oxidative stage): step 2/3. Functionally, transaldolase is important for the balance of metabolites in the pentose-phosphate pathway. This is Transaldolase from Marinobacter nauticus (strain ATCC 700491 / DSM 11845 / VT8) (Marinobacter aquaeolei).